The sequence spans 495 residues: Maternal protein exuperantia-1 (495 aa).

Disordered regions lie at residues 197 to 217 (DESA…SSND) and 377 to 495 (TIKP…AATN). 2 stretches are compositionally biased toward polar residues: residues 207-216 (ENVNRNGSSN) and 398-414 (AASS…TSTE).

Ensures the proper localization of the mRNA of the bicoid gene to the anterior regions of the oocyte thus playing a fundamental role in the establishment of the polarity of the oocyte. May bind the bcd mRNA. This is Maternal protein exuperantia-1 (exu1) from Drosophila pseudoobscura pseudoobscura (Fruit fly).